The chain runs to 252 residues: Uracil-DNA glycosylase (252 aa).

D87 serves as the catalytic Proton acceptor.

It belongs to the uracil-DNA glycosylase (UDG) superfamily. UNG family.

It localises to the host nucleus. The catalysed reaction is Hydrolyzes single-stranded DNA or mismatched double-stranded DNA and polynucleotides, releasing free uracil.. In terms of biological role, excises uracil residues from the DNA which can arise as a result of misincorporation of dUMP residues by DNA polymerase or deamination of cytosines. Therefore may reduce deleterious uracil incorporation into the viral genome, particularly in terminally differentiated cells which lack DNA repair enzymes. This chain is Uracil-DNA glycosylase (46), found in Alcelaphine herpesvirus 1 (strain C500) (AlHV-1).